The chain runs to 273 residues: MLIEVDNIIDEIKAEISSLKEKVPYEPKLVSLVVEPDESTKSYLNSQKRNAKKFGINLEIVESNDLTNDLRKYNEDDDTDAIFIARPLKKGYTELDIAKYINPEKDVEGVSLHNIGSMFYEKELFVPCTAEAVVKIIEDTTDVRGKNIVILGRSTTVGKPAAIMLQRHGRDATVTVTHTKTKNLKEITKEADILVAAIGKANFVDSTFVKEGMIVIDVGINVVDGKIVGDVNKDVSEICQLTPVPGGVGSVTTAILMRNVFRAANNKKGDMQL.

Residues 152 to 154 (GRS), threonine 179, and isoleucine 220 each bind NADP(+).

Belongs to the tetrahydrofolate dehydrogenase/cyclohydrolase family. As to quaternary structure, homodimer.

The catalysed reaction is (6R)-5,10-methylene-5,6,7,8-tetrahydrofolate + NADP(+) = (6R)-5,10-methenyltetrahydrofolate + NADPH. The enzyme catalyses (6R)-5,10-methenyltetrahydrofolate + H2O = (6R)-10-formyltetrahydrofolate + H(+). It participates in one-carbon metabolism; tetrahydrofolate interconversion. Functionally, catalyzes the oxidation of 5,10-methylenetetrahydrofolate to 5,10-methenyltetrahydrofolate and then the hydrolysis of 5,10-methenyltetrahydrofolate to 10-formyltetrahydrofolate. The protein is Bifunctional protein FolD of Petrotoga mobilis (strain DSM 10674 / SJ95).